The primary structure comprises 540 residues: Chaperonin GroEL 1 (540 aa).

Residues 29–32, 86–90, Gly415, 479–481, and Asp495 contribute to the ATP site; these read TIGP, DGTTT, and NAA.

Belongs to the chaperonin (HSP60) family. As to quaternary structure, forms a cylinder of 14 subunits composed of two heptameric rings stacked back-to-back. Interacts with the co-chaperonin GroES.

Its subcellular location is the cytoplasm. The enzyme catalyses ATP + H2O + a folded polypeptide = ADP + phosphate + an unfolded polypeptide.. Functionally, together with its co-chaperonin GroES, plays an essential role in assisting protein folding. The GroEL-GroES system forms a nano-cage that allows encapsulation of the non-native substrate proteins and provides a physical environment optimized to promote and accelerate protein folding. The chain is Chaperonin GroEL 1 from Streptomyces albus G.